A 310-amino-acid chain; its full sequence is tRNA-dihydrouridine(16) synthase (310 aa).

FMN is bound by residues 7–9 and glutamine 68; that span reads PMQ. The Proton donor role is filled by cysteine 98. Residues lysine 139, 200–202, and 224–225 each bind FMN; these read NGE and GR.

The protein belongs to the Dus family. DusC subfamily. It depends on FMN as a cofactor.

The catalysed reaction is 5,6-dihydrouridine(16) in tRNA + NADP(+) = uridine(16) in tRNA + NADPH + H(+). It catalyses the reaction 5,6-dihydrouridine(16) in tRNA + NAD(+) = uridine(16) in tRNA + NADH + H(+). Functionally, catalyzes the synthesis of 5,6-dihydrouridine (D), a modified base found in the D-loop of most tRNAs, via the reduction of the C5-C6 double bond in target uridines. Specifically modifies U16 in tRNAs. This is tRNA-dihydrouridine(16) synthase from Haemophilus influenzae (strain ATCC 51907 / DSM 11121 / KW20 / Rd).